An 84-amino-acid polypeptide reads, in one-letter code: UPF0410 protein YmgE (84 aa).

3 helical membrane passes run 1–21, 27–47, and 58–78; these read MGII…KLIM, GGFF…GWLA, and GFNL…LGIF.

Belongs to the UPF0410 family.

It localises to the cell inner membrane. The protein is UPF0410 protein YmgE (ymgE) of Escherichia coli (strain K12).